Here is a 63-residue protein sequence, read N- to C-terminus: Large ribosomal subunit protein uL29 (63 aa).

Belongs to the universal ribosomal protein uL29 family.

This Vibrio campbellii (strain ATCC BAA-1116) protein is Large ribosomal subunit protein uL29.